We begin with the raw amino-acid sequence, 272 residues long: MLNADHLHVARDGRAILNDLSIRIAPGCVTALLGRNGAGKSTLLGVLAGDLPAGGLARGATVRGGVALNGEPLHAIDAPRLARLRAVLPQASRPAFAFSAREIVLLGRYPHARRAGALTHADGEIASQALALAGATALDARDVTTLSGGELARVQFARVLAQLWPPPGAAQPPRYLLLDEPTAALDLAHQHQLLDTVRRLSRDWNLGVLTIVHDPNLAARHADRIAMLADGAIVAQGAPADVLRPEPIARCYGFRVRLVDAGDGVAPVIVPA.

The ABC transporter domain occupies 2–255 (LNADHLHVAR…EPIARCYGFR (254 aa)). 34 to 41 (GRNGAGKS) contributes to the ATP binding site.

The protein belongs to the ABC transporter superfamily. Heme (hemin) importer (TC 3.A.1.14.5) family. The complex is composed of two ATP-binding proteins (HmuV), two transmembrane proteins (HmuU) and a solute-binding protein (HmuT).

Its subcellular location is the cell inner membrane. Functionally, part of the ABC transporter complex HmuTUV involved in hemin import. Responsible for energy coupling to the transport system. This Burkholderia mallei (strain ATCC 23344) protein is Hemin import ATP-binding protein HmuV.